The sequence spans 623 residues: Chaperone protein HtpG (623 aa).

The tract at residues 1 to 336 (MVSKQQTMGF…ASDLPLNISR (336 aa)) is a; substrate-binding. Residues 337–550 (EILQDNKQVE…EQDMGLEMQR (214 aa)) are b. The interval 551-623 (ILQAAGQQVP…NRVNRLLVSS (73 aa)) is c.

This sequence belongs to the heat shock protein 90 family. As to quaternary structure, homodimer.

The protein resides in the cytoplasm. In terms of biological role, molecular chaperone. Has ATPase activity. In Legionella pneumophila (strain Paris), this protein is Chaperone protein HtpG.